A 393-amino-acid polypeptide reads, in one-letter code: tRNA(Met) cytidine acetate ligase (393 aa).

G81, N142, and R167 together coordinate ATP.

It belongs to the TmcAL family.

It is found in the cytoplasm. The catalysed reaction is cytidine(34) in elongator tRNA(Met) + acetate + ATP = N(4)-acetylcytidine(34) in elongator tRNA(Met) + AMP + diphosphate. Functionally, catalyzes the formation of N(4)-acetylcytidine (ac(4)C) at the wobble position of elongator tRNA(Met), using acetate and ATP as substrates. First activates an acetate ion to form acetyladenylate (Ac-AMP) and then transfers the acetyl group to tRNA to form ac(4)C34. This is tRNA(Met) cytidine acetate ligase from Bacillus cereus (strain ATCC 14579 / DSM 31 / CCUG 7414 / JCM 2152 / NBRC 15305 / NCIMB 9373 / NCTC 2599 / NRRL B-3711).